A 366-amino-acid polypeptide reads, in one-letter code: GTP-binding protein 10 (366 aa).

Residues 13-148 enclose the Obg domain; that stretch reads GNFIDNLRIF…RIVHLDLKVI (136 aa). The OBG-type G domain occupies 149-344; that stretch reads ADVGLVGFPN…LKSCIRKALD (196 aa). Residues 155-162, 202-206, and 278-281 contribute to the GTP site; these read GFPNAGKS, DLPGL, and NKMD. A compositionally biased stretch (basic and acidic residues) spans 346–355; the sequence is QDGKESDAHR. Residues 346 to 366 are disordered; it reads QDGKESDAHRSKQLLNLQSSS.

This sequence belongs to the TRAFAC class OBG-HflX-like GTPase superfamily. OBG GTPase family.

It is found in the nucleus. Its subcellular location is the nucleolus. Functionally, may be involved in the ribosome maturation process. The polypeptide is GTP-binding protein 10 (Gtpbp10) (Mus musculus (Mouse)).